The following is a 317-amino-acid chain: Thiamine thiazole synthase (317 aa).

Residues C78, 99 to 100, G107, and V172 contribute to the substrate site; that span reads EA. Residue C206 is modified to 2,3-didehydroalanine (Cys). Substrate is bound by residues D208, H223, M275, and 285 to 287; that span reads RMG.

This sequence belongs to the THI4 family. As to quaternary structure, homooctamer. It depends on Fe cation as a cofactor. During the catalytic reaction, a sulfide is transferred from Cys-206 to a reaction intermediate, generating a dehydroalanine residue.

The protein localises to the cytoplasm. It localises to the nucleus. The enzyme catalyses [ADP-thiazole synthase]-L-cysteine + glycine + NAD(+) = [ADP-thiazole synthase]-dehydroalanine + ADP-5-ethyl-4-methylthiazole-2-carboxylate + nicotinamide + 3 H2O + 2 H(+). Functionally, involved in biosynthesis of the thiamine precursor thiazole. Catalyzes the conversion of NAD and glycine to adenosine diphosphate 5-(2-hydroxyethyl)-4-methylthiazole-2-carboxylic acid (ADT), an adenylated thiazole intermediate. The reaction includes an iron-dependent sulfide transfer from a conserved cysteine residue of the protein to a thiazole intermediate. The enzyme can only undergo a single turnover, which suggests it is a suicide enzyme. May have additional roles in adaptation to various stress conditions and in DNA damage tolerance. The chain is Thiamine thiazole synthase from Yarrowia lipolytica (strain CLIB 122 / E 150) (Yeast).